The following is a 202-amino-acid chain: Guanylate kinase (202 aa).

The 179-residue stretch at 3-181 (GNLFVVAAPS…ALDDLRAVVR (179 aa)) folds into the Guanylate kinase-like domain. 10 to 17 (APSGAGKT) is a binding site for ATP.

Belongs to the guanylate kinase family.

It localises to the cytoplasm. The enzyme catalyses GMP + ATP = GDP + ADP. Essential for recycling GMP and indirectly, cGMP. The sequence is that of Guanylate kinase from Dechloromonas aromatica (strain RCB).